An 87-amino-acid chain; its full sequence is U14-lycotoxin-Ls1b (87 aa).

The signal sequence occupies residues 1–20; the sequence is MNSKVFVVLLLLALSTCVLS. One can recognise a WAP domain in the interval 21-66; the sequence is EKYCPTPRNTSCKKMNIRNNCCRDSDCTSNAFCCAEPCGNFCHKAS. Disulfide bonds link Cys24–Cys54, Cys32–Cys58, Cys41–Cys53, Cys42–Cys80, and Cys47–Cys62.

This sequence belongs to the venom protein 11 family. 01 (wap-1) subfamily. Contains 5 disulfide bonds. As to expression, expressed by the venom gland.

It localises to the secreted. Has antibacterial activity. The sequence is that of U14-lycotoxin-Ls1b from Lycosa singoriensis (Wolf spider).